The sequence spans 644 residues: Sodium/hydrogen exchanger 9 (644 aa).

Residues 1-20 (MAGQLRFTSGKDEDHFQHQG) lie on the Lumenal side of the membrane. A helical membrane pass occupies residues 21–41 (AVELLAFNFLLILTILTIWLF). Residues 42–45 (KNHR) are Cytoplasmic-facing. Residues 46–66 (FRFLHETGGAMVYGLIMGLIL) traverse the membrane as a helical segment. At 67–126 (RYATAPTDIDSGTVYNCGNLFFSPSTLLVNITDQVYEYKYQREINQHNISPHQGNAILEK) the chain is on the lumenal side. Residues 127-147 (MTFDPEIFFNVLLPPIIFHAG) traverse the membrane as a helical segment. At 148–164 (YSLKKRHFFQNLGSILT) the chain is on the cytoplasmic side. A helical membrane pass occupies residues 165-185 (YAFLGTAISCVVIGLIMYGFV). Residues 186–203 (KAMVHAGQLKSGDFHFTD) lie on the Lumenal side of the membrane. Residues 204–224 (CLFFGSLMSATDPVTVLAIFH) form a helical membrane-spanning segment. Over 225–235 (ELHVDPDLYTL) the chain is Cytoplasmic. The helical transmembrane segment at 236–256 (LFGESVLNDAVAIVLTYSISI) threads the bilayer. Residues 257–277 (YSPKENPNAFDTAAFFQSVGN) are Lumenal-facing. The chain crosses the membrane as a helical span at residues 278-298 (FLGIFAGSFAMGSAYAVVTAL). At 299-309 (LTKFTKLREFP) the chain is on the cytoplasmic side. Residues 310-327 (MLETGLFFLLSWSAFLSA) form a helical membrane-spanning segment. The Lumenal portion of the chain corresponds to 328–333 (EAAGLT). The helical transmembrane segment at 334–350 (GIVAVLFCGVTQAHYTY) threads the bilayer. Residues 351-364 (NNLSSDSKLRTKQL) are Cytoplasmic-facing. A helical membrane pass occupies residues 365 to 385 (FEFMNFLAENVIFCYMGLALF). Residue threonine 386 is a topological domain, lumenal. Residues 387–407 (FQNHIFNALFILGAFLAIFVA) form a helical membrane-spanning segment. The Cytoplasmic portion of the chain corresponds to 408-429 (RACNIYPLSFLLNLGRKQKIPW). A helical membrane pass occupies residues 430–450 (NFQHMMMFSGLRGAIAFALAI). At 451-465 (RNTESQPKQMMFTTT) the chain is on the lumenal side. A helical transmembrane segment spans residues 466–486 (LLLVFFTVWVFGGGTTPMLTW). At 487–644 (LQIRVGVDLD…EQTRGQPQMD (158 aa)) the chain is on the cytoplasmic side. A disordered region spans residues 590–644 (YQEQSPSPSSPTTKLALDQKSSGQTPGKENIYEGDLGLGGYDLKLEQTRGQPQMD).

This sequence belongs to the monovalent cation:proton antiporter 1 (CPA1) transporter (TC 2.A.36) family. As to quaternary structure, homodimer; phosphatidylinositol-4,5-bisphosphate (PIP2) and phosphatidylinositol 3,4,5-trisphosphate (PIP3) could be involved in the dimer stabilization. Interacts (via the C-terminus) with RACK1. Interacts with CHP1. In terms of tissue distribution, expressed in the brain. Highly expressed in immune cells, specifically macrophages.

The protein resides in the late endosome membrane. The protein localises to the cell membrane. It localises to the early endosome membrane. It is found in the recycling endosome membrane. Its subcellular location is the cytoplasmic vesicle. The protein resides in the phagosome membrane. It catalyses the reaction Na(+)(in) + H(+)(out) = Na(+)(out) + H(+)(in). The catalysed reaction is K(+)(in) + H(+)(out) = K(+)(out) + H(+)(in). Endosomal Na(+), K(+)/H(+) antiporter. Mediates the electroneutral exchange of endosomal luminal H(+) for a cytosolic Na(+) or K(+). By facilitating proton efflux, SLC9A9 counteracts the acidity generated by vacuolar (V)-ATPase, thereby limiting luminal acidification. Regulates organellar pH and consequently, endosome maturation and endocytic trafficking of plasma membrane receptors and neurotransporters. Promotes the recycling of transferrin receptors back to the cell surface to facilitate additional iron uptake in the brain. Regulates synaptic transmission by regulating the luminal pH of axonal endosomes. Regulates phagosome lumenal pH, thus affecting phagosome maturation, and consequently, microbicidal activity in macrophages. Can also be active at the cell surface of specialized cells, e.g., in the inner ear hair bundles uses the high K(+) of the endolymph to regulate intracelular pH. The sequence is that of Sodium/hydrogen exchanger 9 (Slc9a9) from Mus musculus (Mouse).